The following is a 469-amino-acid chain: Adenosylhomocysteinase (469 aa).

Positions 63, 139, and 164 each coordinate substrate. Position 165 to 167 (165 to 167) interacts with NAD(+); that stretch reads TTT. Residues Lys194 and Asp198 each coordinate substrate. NAD(+)-binding positions include Asn199, 228-233, Glu251, Asn300, 321-323, and Asn375; these read GYGDVG and IGH.

Belongs to the adenosylhomocysteinase family. The cofactor is NAD(+).

It is found in the cytoplasm. It catalyses the reaction S-adenosyl-L-homocysteine + H2O = L-homocysteine + adenosine. It functions in the pathway amino-acid biosynthesis; L-homocysteine biosynthesis; L-homocysteine from S-adenosyl-L-homocysteine: step 1/1. In terms of biological role, may play a key role in the regulation of the intracellular concentration of adenosylhomocysteine. In Pseudomonas fluorescens (strain ATCC BAA-477 / NRRL B-23932 / Pf-5), this protein is Adenosylhomocysteinase.